The chain runs to 165 residues: Chorismate pyruvate-lyase (165 aa).

The substrate site is built by M35, R77, L115, and E156.

The protein belongs to the UbiC family. Monomer.

It is found in the cytoplasm. It carries out the reaction chorismate = 4-hydroxybenzoate + pyruvate. It participates in cofactor biosynthesis; ubiquinone biosynthesis. In terms of biological role, removes the pyruvyl group from chorismate, with concomitant aromatization of the ring, to provide 4-hydroxybenzoate (4HB) for the ubiquinone pathway. The protein is Chorismate pyruvate-lyase of Enterobacter sp. (strain 638).